The sequence spans 729 residues: Capsid protein VP1 (729 aa).

Over residues 1 to 10 (MAPPAKRAKR) the composition is skewed to basic residues. Disordered stretches follow at residues 1 to 38 (MAPPAKRAKRGWVPPGYKYLGPGNSLDQGEPTNPSDAA), 96 to 115 (LATDSEPGTSGVSRAGKRTR), and 130 to 185 (KLTS…VGVS). The Nuclear localization signal motif lies at 4-13 (PAKRAKRGWV). The tract at residues 19–64 (YLGPGNSLDQGEPTNPSDAAAKEHDEAYDQYIKSGKNPYLYFSAAD) is phospholipase A2-like. A compositionally biased stretch (polar residues) spans 25–35 (SLDQGEPTNPS). Low complexity predominate over residues 132 to 142 (TSSAAQQSSQT). A compositionally biased stretch (polar residues) spans 143 to 152 (MSDGTSQPDS). The span at 168–184 (GPGGSGGGGSGGGGVGV) shows a compositional bias: gly residues. Mg(2+) is bound at residue Asn325.

Belongs to the parvoviridae capsid protein family.

It localises to the virion. The protein resides in the host nucleus. Functionally, capsid protein self-assembles to form an icosahedral capsid with a T=1 symmetry, about 22 nm in diameter, and consisting of 60 copies of two size variants of the capsid proteins, VP1 and VP2, which differ by the presence of an N-terminal extension in the minor protein VP1. The capsid encapsulates the genomic ssDNA. Capsid proteins are responsible for the attachment to host cell receptors. This attachment induces virion internalization predominantly through clathrin-dependent endocytosis. Binding to the host receptors also induces capsid rearrangements leading to surface exposure of VP1 N-terminus, specifically its phospholipase A2-like region and putative nuclear localization signal(s). VP1 N-terminus might serve as a lipolytic enzyme to breach the endosomal membrane during entry into host cell and might contribute to virus transport to the nucleus. The polypeptide is Capsid protein VP1 (Mus musculus (Mouse)).